We begin with the raw amino-acid sequence, 474 residues long: Ribulose bisphosphate carboxylase large chain (474 aa).

P2 carries the post-translational modification N-acetylproline. At K13 the chain carries N6,N6,N6-trimethyllysine. Substrate is bound by residues N122 and T172. K174 serves as the catalytic Proton acceptor. Residue K176 participates in substrate binding. Mg(2+)-binding residues include K200, D202, and E203. Position 200 is an N6-carboxylysine (K200). H293 acts as the Proton acceptor in catalysis. Substrate contacts are provided by R294, H326, and S378.

Belongs to the RuBisCO large chain family. Type I subfamily. In terms of assembly, heterohexadecamer of 8 large chains and 8 small chains; disulfide-linked. The disulfide link is formed within the large subunit homodimers. It depends on Mg(2+) as a cofactor. In terms of processing, the disulfide bond which can form in the large chain dimeric partners within the hexadecamer appears to be associated with oxidative stress and protein turnover.

The protein localises to the plastid. The protein resides in the chloroplast. It carries out the reaction 2 (2R)-3-phosphoglycerate + 2 H(+) = D-ribulose 1,5-bisphosphate + CO2 + H2O. The catalysed reaction is D-ribulose 1,5-bisphosphate + O2 = 2-phosphoglycolate + (2R)-3-phosphoglycerate + 2 H(+). Functionally, ruBisCO catalyzes two reactions: the carboxylation of D-ribulose 1,5-bisphosphate, the primary event in carbon dioxide fixation, as well as the oxidative fragmentation of the pentose substrate in the photorespiration process. Both reactions occur simultaneously and in competition at the same active site. The sequence is that of Ribulose bisphosphate carboxylase large chain from Oltmannsiellopsis viridis (Marine flagellate).